The sequence spans 300 residues: ADP-polyphosphate phosphotransferase 1 (300 aa).

It belongs to the polyphosphate kinase 2 (PPK2) family. Class I subfamily. As to quaternary structure, homotetramer. It depends on Mg(2+) as a cofactor.

It carries out the reaction [phosphate](n) + ATP = [phosphate](n+1) + ADP. It catalyses the reaction [phosphate](n) + GTP = [phosphate](n+1) + GDP. Its function is as follows. Uses inorganic polyphosphate (polyP) as a donor to convert ADP to ATP. Can also convert GDP to GTP, with lower efficiency. Cannot dephosphorylate ATP in the presence of polyP. This is ADP-polyphosphate phosphotransferase 1 from Rhizobium meliloti (strain 1021) (Ensifer meliloti).